We begin with the raw amino-acid sequence, 447 residues long: Glutamate--tRNA ligase 1 (447 aa).

The 'HIGH' region signature appears at Pro-10–Asn-20. A 'KMSKS' region motif is present at residues Lys-240–Arg-244. ATP is bound at residue Lys-243.

Belongs to the class-I aminoacyl-tRNA synthetase family. Glutamate--tRNA ligase type 1 subfamily. As to quaternary structure, monomer.

The protein localises to the cytoplasm. It catalyses the reaction tRNA(Glu) + L-glutamate + ATP = L-glutamyl-tRNA(Glu) + AMP + diphosphate. Its function is as follows. Catalyzes the attachment of glutamate to tRNA(Glu) in a two-step reaction: glutamate is first activated by ATP to form Glu-AMP and then transferred to the acceptor end of tRNA(Glu). The sequence is that of Glutamate--tRNA ligase 1 from Rickettsia felis (strain ATCC VR-1525 / URRWXCal2) (Rickettsia azadi).